Reading from the N-terminus, the 71-residue chain is MDLNLRNAVIANVTGNNQDQLEHTIVDAIQSGEEKMLPGLGVLFEVLWQHASDSEKNEMLKTLEGGLKPAQ.

It belongs to the SspI family.

It is found in the spore core. The polypeptide is Small, acid-soluble spore protein I (Bacillus velezensis (strain DSM 23117 / BGSC 10A6 / LMG 26770 / FZB42) (Bacillus amyloliquefaciens subsp. plantarum)).